A 674-amino-acid chain; its full sequence is YAP1-binding protein 1 (674 aa).

This sequence belongs to the YBP1 family. In terms of assembly, interacts with YAP1. Forms a peroxide stress induced complex with YAP1 in the cytoplasm. Systematic proteome-wide 2-hybrid interaction studies suggest that YAP1, HYR1/GPX3, and YBP1 all interact with the nuclear pore complex subunit NUP116, which is involved in nucleocytoplasmic transport.

It localises to the cytoplasm. Functionally, involved in oxidative stress response and redox homeostasis. Required for hydrogen peroxide-induced oxidation and nuclear localization (activation) of YAP1. Functions probably in concert with HYP1/GPX3, the actual YAP1 modifying enzyme. YBP1 is not required for HYP1/GPX3-independent, diamide-induced oxidation of YAP1. The chain is YAP1-binding protein 1 from Saccharomyces cerevisiae (strain ATCC 204508 / S288c) (Baker's yeast).